The sequence spans 224 residues: uncharacterized protein (224 aa).

The active site involves aspartate 52.

It belongs to the pseudouridine synthase RluA family.

It catalyses the reaction a uridine in RNA = a pseudouridine in RNA. This is an uncharacterized protein from Haemophilus influenzae (strain ATCC 51907 / DSM 11121 / KW20 / Rd).